Reading from the N-terminus, the 877-residue chain is Hopanoid transporter HpnN (877 aa).

The Cytoplasmic segment spans residues 1 to 16; that stretch reads MVTSLIVRLVAWSVRR. Residues 17-37 traverse the membrane as a helical segment; sequence PVWVVVLSLLIAAFSGVYVAR. Residues 38 to 279 lie on the Periplasmic side of the membrane; sequence HFKINTDISK…FSSVEDGAAL (242 aa). The helical transmembrane segment at 280 to 295 threads the bilayer; that stretch reads NGVVTLLVVFVILWLA. Over 296 to 299 the chain is Cytoplasmic; that stretch reads LRSK. The helical transmembrane segment at 300–323 threads the bilayer; the sequence is RMIASVLVTLFVGLVVTAALGLAM. An SSD domain is found at 302–428; sequence IASVLVTLFV…LTLLPALLRL (127 aa). At 324 to 332 the chain is on the periplasmic side; sequence VGSLNMISV. A helical membrane pass occupies residues 333–351; sequence AFMVLFVGLGVDFSIQYGV. Over 352–373 the chain is Cytoplasmic; it reads KYREERFRDERIDHALIGAAHS. Residues 374–394 traverse the membrane as a helical segment; it reads MGMPLALATTAVAASFFSFIP. Topologically, residues 395 to 399 are periplasmic; the sequence is TAYRG. The helical transmembrane segment at 400–426 threads the bilayer; sequence VSELGLIAGVGMFVALLTTLTLLPALL. At 427-452 the chain is on the cytoplasmic side; sequence RLFAPPGESKTPGFPWLAPVDDYLDR. The helical transmembrane segment at 453-472 threads the bilayer; that stretch reads HRKPILIGTLAVVIGALPLL. Topologically, residues 473–718 are periplasmic; it reads AFLHFDFNPL…ILHSANTIIS (246 aa). The helical transmembrane segment at 719-739 threads the bilayer; the sequence is AFLHAALWSIISITILLWITL. Residues 740 to 743 lie on the Cytoplasmic side of the membrane; the sequence is RRFG. Residues 744 to 766 traverse the membrane as a helical segment; sequence DVLRTLVPLLVSGIVTLEMCVVL. Over 767–774 the chain is Periplasmic; the sequence is GMSLNFAN. Residues 775–794 traverse the membrane as a helical segment; the sequence is IIALPLMLGVGVAFKVYFVM. Residues 795-809 lie on the Cytoplasmic side of the membrane; that stretch reads AWRAGQTGLLHSSLT. The helical transmembrane segment at 810–827 threads the bilayer; the sequence is HAVLFSAATTATAFGSLW. At 828 to 836 the chain is on the periplasmic side; it reads LSHHPGTSS. The helical transmembrane segment at 837-858 threads the bilayer; the sequence is MGKLLALALTCTLIGAVVFQPV. Topologically, residues 859-877 are cytoplasmic; it reads LMGKPRVKRAKNQSQGINE.

It belongs to the resistance-nodulation-cell division (RND) (TC 2.A.6) family. MmpL subfamily. In terms of assembly, homodimer.

Its subcellular location is the cell inner membrane. In terms of biological role, essential for hopanoid transport from the cytoplasmic to the outer membrane. Is capable of shuttling hopanoid lipids from the inner membrane to the periplasm, where they probably spontaneously insert to the inner leaflet of the outer membrane, strengthening the cell envelope. May be a proton-motive-force (PMF)-dependent transporter. Is critical for multidrug resistance and cell wall remodeling in Burkholderia. The polypeptide is Hopanoid transporter HpnN (Burkholderia multivorans (strain ATCC 17616 / 249)).